Reading from the N-terminus, the 196-residue chain is ECF RNA polymerase sigma factor SigM (196 aa).

A sigma-70 factor domain-2 region spans residues 39–105; it reads LFRRHHRQLH…ACLDRLRRAK (67 aa). The Polymerase core binding motif lies at 63 to 66; that stretch reads DALQ. The interval 130–181 is sigma-70 factor domain-4; the sequence is AVQRALMRLPVEQRAAVVAVDMQGYSIADTARMLGVAEGTVKSRCARARARL. Positions 156–175 form a DNA-binding region, H-T-H motif; it reads IADTARMLGVAEGTVKSRCA.

This sequence belongs to the sigma-70 factor family. ECF subfamily. In terms of assembly, interacts transiently with the RNA polymerase catalytic core formed by RpoA, RpoB, RpoC and RpoZ (2 alpha, 1 beta, 1 beta' and 1 omega subunit) to form the RNA polymerase holoenzyme that can initiate transcription. Interacts (via sigma-70 factor domain-4) with anti-sigma-M factor RsmA (AC L7N5D7).

Sigma factors are initiation factors that promote the attachment of RNA polymerase to specific initiation sites and are then released. Extracytoplasmic function (ECF) sigma factors are held in an inactive form by an anti-sigma factor (RsaM, AC L7N5D7) until released by regulated intramembrane proteolysis. This sigma factor is required for the synthesis of surface or secreted molecules. This Mycobacterium tuberculosis (strain ATCC 25618 / H37Rv) protein is ECF RNA polymerase sigma factor SigM (sigM).